Reading from the N-terminus, the 215-residue chain is Large ribosomal subunit protein eL15 (215 aa).

The segment at 179–215 (GTVKHKWKKKEKEREQKKRHEATKYYRLQNYDKLPGK) is disordered. The segment covering 188–202 (KEKEREQKKRHEATK) has biased composition (basic and acidic residues).

This sequence belongs to the eukaryotic ribosomal protein eL15 family.

The chain is Large ribosomal subunit protein eL15 from Sulfurisphaera tokodaii (strain DSM 16993 / JCM 10545 / NBRC 100140 / 7) (Sulfolobus tokodaii).